We begin with the raw amino-acid sequence, 264 residues long: MIGRLLRGGFMTAIYAYLYIPIIILIVNSFNSSRFGINWQGFTTKWYSLLMNNDSLLQAAQHSLTMAVFSATFATLIGSLTAVALYRYRFRGKPFVSGMLFVVMMSPDIVMAISLLVLFMLLGIQLGFWSLLFSHITFCLPFVVVTVYSRLKGFDVRMLEAAKDLGASEFTILRKIILPLAMPAVAAGWVLSFTLSMDDVVVSSFVTGPSYEILPLKIYSMVKVGVSPEVNALATILLVLSLVMVIASQLIARDKTKGNGGDVK.

Transmembrane regions (helical) follow at residues 10–30 (FMTA…VNSF), 66–86 (MAVF…VALY), 109–129 (IVMA…LGFW), 131–151 (LLFS…YSRL), 176–196 (IILP…FTLS), and 232–252 (ALAT…QLIA). The ABC transmembrane type-1 domain occupies 60 to 248 (AQHSLTMAVF…VLSLVMVIAS (189 aa)).

Belongs to the binding-protein-dependent transport system permease family. CysTW subfamily.

It localises to the cell inner membrane. In terms of biological role, required for the activity of the bacterial periplasmic transport system of putrescine and spermidine. The polypeptide is Spermidine/putrescine transport system permease protein PotC (potC) (Shigella flexneri).